Consider the following 617-residue polypeptide: Acyl-CoA dehydrogenase family member 11 (617 aa).

The interval 1–47 (MHRIGNAVRMASSSSANATITARHTQYSHAKTGGFSQTGPTLHNPYK) is disordered. Residues 11–22 (ASSSSANATITA) show a composition bias toward low complexity. Positions 23–41 (RHTQYSHAKTGGFSQTGPT) are enriched in polar residues. FAD is bound by residues 206–215 (QWMTEKKGGS) and 241–243 (FSS). Ser215 lines the substrate pocket. Positions 267 and 334 each coordinate substrate. FAD contacts are provided by residues Arg359, 366–369 (QSKW), Glu437, Gly441, and 464–466 (EGT).

This sequence belongs to the acyl-CoA dehydrogenase family. Homotetramer; dimer of dimers.

Promotes adaption to elevated temperatures by regulating expression of the lipid desaturase, fat-7. Binds selectively and with high affinity to fatty acids with chain lengths from C10 to C12 and prevents them from activating fat-7 expression mediated by the nuclear hormone receptor nhr-49, leading to low levels of membrane lipid desaturation and membrane fluidity for adaption to heat. This Caenorhabditis elegans protein is Acyl-CoA dehydrogenase family member 11.